Here is a 184-residue protein sequence, read N- to C-terminus: Photosystem I assembly protein Ycf4 (184 aa).

Helical transmembrane passes span Asn-21–Tyr-43 and Val-58–Leu-80.

It belongs to the Ycf4 family.

The protein resides in the plastid. It localises to the chloroplast thylakoid membrane. Functionally, seems to be required for the assembly of the photosystem I complex. In Psilotum nudum (Whisk fern), this protein is Photosystem I assembly protein Ycf4.